Reading from the N-terminus, the 489-residue chain is Betaine aldehyde dehydrogenase (489 aa).

Residues Thr26 and Asp93 each contribute to the K(+) site. 150 to 152 (GAW) lines the NAD(+) pocket. Lys162 serves as the catalytic Charge relay system. 176–179 (KPSE) provides a ligand contact to NAD(+). A K(+)-binding site is contributed by Val180. Residue 229 to 232 (GVET) participates in NAD(+) binding. Leu245 lines the K(+) pocket. Residue Glu251 is the Proton acceptor of the active site. NAD(+) contacts are provided by Gly253, Cys285, and Glu386. Cys285 functions as the Nucleophile in the catalytic mechanism. At Cys285 the chain carries Cysteine sulfenic acid (-SOH). Residues Lys456 and Gly459 each contribute to the K(+) site. The Charge relay system role is filled by Glu463.

The protein belongs to the aldehyde dehydrogenase family. As to quaternary structure, dimer of dimers. K(+) is required as a cofactor.

It catalyses the reaction betaine aldehyde + NAD(+) + H2O = glycine betaine + NADH + 2 H(+). Its pathway is amine and polyamine biosynthesis; betaine biosynthesis via choline pathway; betaine from betaine aldehyde: step 1/1. In terms of biological role, involved in the biosynthesis of the osmoprotectant glycine betaine. Catalyzes the irreversible oxidation of betaine aldehyde to the corresponding acid. The polypeptide is Betaine aldehyde dehydrogenase (Burkholderia ambifaria (strain MC40-6)).